The following is a 329-amino-acid chain: MSLLPHLILYLTLLTVVVTGETLRPRFYSETCPEAESIVRREMKKAMIKEARSVASVMRFQFHDCFVNGCDASLLLDDTPNMLGEKLSLSNIDSLRSFEVVDDIKEALEKACPATVSCADIVIMAARDAVALTGGPDWEVKLGRKDSLTASQQDSDDIMPSPRANATFLIDLFERFNLSVKDMVALSGSHSIGQGRCFSIMFRLYNQSGSGKPDPALEPSYRKKLDKLCPLGGDENVTGDLDATPQVFDNQYFKDLVSGRGFLNSDQTLYTNLVTREYVKMFSEDQDEFFRAFAEGMVKLGDLQSGRPGEIRFNCRVVNRRPIDVLLVS.

Positions 1–19 are cleaved as a signal peptide; that stretch reads MSLLPHLILYLTLLTVVVT. 4 disulfides stabilise this stretch: cysteine 32/cysteine 112, cysteine 65/cysteine 70, cysteine 118/cysteine 315, and cysteine 197/cysteine 229. The Proton acceptor role is filled by histidine 63. Ca(2+)-binding residues include aspartate 64, valine 67, glycine 69, aspartate 71, and serine 73. Proline 160 lines the substrate pocket. N-linked (GlcNAc...) asparagine glycosylation is found at asparagine 165 and asparagine 177. Histidine 190 contributes to the heme b binding site. A Ca(2+)-binding site is contributed by serine 191. Asparagine 206 and asparagine 236 each carry an N-linked (GlcNAc...) asparagine glycan. Positions 242, 244, and 249 each coordinate Ca(2+).

This sequence belongs to the peroxidase family. Classical plant (class III) peroxidase subfamily. Requires heme b as cofactor. Ca(2+) serves as cofactor.

It is found in the secreted. The protein localises to the vacuole. The catalysed reaction is 2 a phenolic donor + H2O2 = 2 a phenolic radical donor + 2 H2O. Functionally, removal of H(2)O(2), oxidation of toxic reductants, biosynthesis and degradation of lignin, suberization, auxin catabolism, response to environmental stresses such as wounding, pathogen attack and oxidative stress. These functions might be dependent on each isozyme/isoform in each plant tissue. This Arabidopsis thaliana (Mouse-ear cress) protein is Peroxidase 17 (PER17).